Consider the following 264-residue polypeptide: 3-methyl-2-oxobutanoate hydroxymethyltransferase (264 aa).

Mg(2+)-binding residues include Asp45 and Asp84. 3-methyl-2-oxobutanoate contacts are provided by residues 45 to 46 (DS), Asp84, and Lys112. Glu114 is a binding site for Mg(2+). Catalysis depends on Glu181, which acts as the Proton acceptor.

The protein belongs to the PanB family. Homodecamer; pentamer of dimers. Mg(2+) serves as cofactor.

It is found in the cytoplasm. It carries out the reaction 3-methyl-2-oxobutanoate + (6R)-5,10-methylene-5,6,7,8-tetrahydrofolate + H2O = 2-dehydropantoate + (6S)-5,6,7,8-tetrahydrofolate. It participates in cofactor biosynthesis; (R)-pantothenate biosynthesis; (R)-pantoate from 3-methyl-2-oxobutanoate: step 1/2. Functionally, catalyzes the reversible reaction in which hydroxymethyl group from 5,10-methylenetetrahydrofolate is transferred onto alpha-ketoisovalerate to form ketopantoate. This is 3-methyl-2-oxobutanoate hydroxymethyltransferase from Erwinia tasmaniensis (strain DSM 17950 / CFBP 7177 / CIP 109463 / NCPPB 4357 / Et1/99).